The sequence spans 368 residues: C-X-C chemokine receptor type 3 (368 aa).

Residues 1–53 (MVLEVSDHQVLNDAEVAALLENFSSSYDYGENESDSCCTSPPCPQDFSLNFDR) are Extracellular-facing. N22 carries an N-linked (GlcNAc...) asparagine glycan. Residues Y27 and Y29 each carry the sulfotyrosine modification. An N-linked (GlcNAc...) asparagine glycan is attached at N32. A helical membrane pass occupies residues 54-80 (AFLPALYSLLFLLGLLGNGAVAAVLLS). Residues 81 to 89 (RRTALSSTD) are Cytoplasmic-facing. The helical transmembrane segment at 90 to 110 (TFLLHLAVADTLLVLTLPLWA) threads the bilayer. Residues 111 to 125 (VDAAVQWVFGSGLCK) lie on the Extracellular side of the membrane. The cysteines at positions 124 and 203 are disulfide-linked. A helical membrane pass occupies residues 126 to 147 (VAGALFNINFYAGALLLACISF). Residues 148-169 (DRYLNIVHATQLYRRGPPARVT) are Cytoplasmic-facing. The chain crosses the membrane as a helical span at residues 170-189 (LTCLAVWGLCLLFALPDFIF). The Extracellular segment spans residues 190–212 (LSAHHDERLNATHCQYNFPQVGR). The chain crosses the membrane as a helical span at residues 213-233 (TALRVLQLVAGFLLPLLVMAY). Over 234–255 (CYAHILAVLLVSRGQRRLRAMR) the chain is Cytoplasmic. The chain crosses the membrane as a helical span at residues 256-277 (LVVVVVVAFALCWTPYHLVVLV). Residues 278–298 (DILMDLGALARNCGRESRVDV) are Extracellular-facing. A helical membrane pass occupies residues 299 to 321 (AKSVTSGLGYMHCCLNPLLYAFV). The Cytoplasmic portion of the chain corresponds to 322 to 368 (GVKFRERMWMLLLRLGCPNQRGLQRQPSSSRRDSSWSETSEASYSGL). The tract at residues 342–368 (RGLQRQPSSSRRDSSWSETSEASYSGL) is disordered. Positions 357–368 (WSETSEASYSGL) are enriched in low complexity.

The protein belongs to the G-protein coupled receptor 1 family. In terms of assembly, homomer. Forms heteromers with ACKR4. As to quaternary structure, interacts with PF4/CXCL4. In terms of processing, sulfation on Tyr-27 and Tyr-29 is essential for CXCL10 binding and subsequent signal transduction induction. Post-translationally, N-glycosylated. In terms of tissue distribution, isoform 1 and isoform 2 are mainly expressed in heart, kidney, liver and skeletal muscle. Isoform 1 is also expressed in placenta. Isoform 2 is expressed in endothelial cells. Expressed in T-cells (at protein level).

It is found in the cell membrane. Its function is as follows. Receptor for the C-X-C chemokine CXCL9, CXCL10 and CXCL11 and mediates the proliferation, survival and angiogenic activity of human mesangial cells (HMC) through a heterotrimeric G-protein signaling pathway. Binds to CCL21. Probably promotes cell chemotaxis response. Upon activation by PF4, induces activated T-lymphocytes migration mediated via downstream Ras/extracellular signal-regulated kinase (ERK) signaling. Functionally, receptor for the C-X-C chemokine CXCL4 and also mediates the inhibitory activities of CXCL9, CXCL10 and CXCL11 on the proliferation, survival and angiogenic activity of human microvascular endothelial cells (HMVEC) through a cAMP-mediated signaling pathway. Does not promote cell chemotaxis respons. Interaction with CXCL4 or CXCL10 leads to activation of the p38MAPK pathway and contributes to inhibition of angiogenesis. Overexpression in renal cancer cells down-regulates expression of the anti-apoptotic protein HMOX1 and promotes apoptosis. Mediates the activity of CXCL11. This is C-X-C chemokine receptor type 3 (CXCR3) from Homo sapiens (Human).